Consider the following 453-residue polypeptide: uncharacterized protein (453 aa).

The first 23 residues, 1–23, serve as a signal peptide directing secretion; it reads MFLLQRFFIYGLFLACFYTTVFG. The Lumenal portion of the chain corresponds to 24–137; that stretch reads EKHFEAEEYR…EKQFSYSSGT (114 aa). The helical transmembrane segment at 138-158 threads the bilayer; sequence NGILATFLTAIPPNIFILLVP. The Cytoplasmic portion of the chain corresponds to 159 to 165; sequence KSFDTSM. A helical transmembrane segment spans residues 166 to 186; that stretch reads LNLFVAVSAGSLLGDVFLQLL. Topologically, residues 187–194 are lumenal; that stretch reads PTVYSTNG. Residues 195–215 form a helical membrane-spanning segment; it reads GDFPASSVYSILIGALVFFLM. Topologically, residues 216–358 are cytoplasmic; sequence DKGIRILIHE…LRNGYTKSQV (143 aa). Over residues 229–238 the composition is skewed to basic and acidic residues; it reads SLSKPKKDGE. Residues 229 to 278 are disordered; that stretch reads SLSKPKKDGEETSSVNKPSASSTQTDVKGVEGLRKRNVKDDQNSKGHEPD. Positions 240 to 254 are enriched in polar residues; that stretch reads TSSVNKPSASSTQTD. Residues 256 to 278 are compositionally biased toward basic and acidic residues; it reads KGVEGLRKRNVKDDQNSKGHEPD. A helical membrane pass occupies residues 359 to 379; it reads LVLQMITMVTGLLGAIVATYI. Residues 380–399 lie on the Lumenal side of the membrane; sequence YTASSSSSPYGSFLLQLEDK. The chain crosses the membrane as a helical span at residues 400–420; sequence LLPFTAGGFLYIAYLGVFPEL. Over 421–432 the chain is Cytoplasmic; it reads LEINLSKGKLGN. A helical transmembrane segment spans residues 433 to 453; it reads MIYTALYMMFIVGGFSFLYYV.

This sequence belongs to the ZIP transporter (TC 2.A.5) family. KE4/Catsup subfamily.

It localises to the endoplasmic reticulum membrane. This is an uncharacterized protein from Schizosaccharomyces pombe (strain 972 / ATCC 24843) (Fission yeast).